The chain runs to 539 residues: MPSPTTVPVATAGRLAEPYIDPAAQVHAIASIIGDVRIAAGVRVAAGVSIRADEGAPFQVGKESILQEGAVIHGLEYGRVLGDDQADYSVWIGQRVAITHKALIHGPAYLGDDCFVGFRSTVFNARVGAGSVIMMHALVQDVEIPPGRYVPSGAIITTQQQADRLPEVRPEDREFARHIIGSPPVIVRSTPAATADFHSTPTPSPLRPSSSEATTVSAYNGQGRLSSEVITQVRSLLNQGYRIGTEHADKRRFRTSSWQPCAPIQSTNERQVLSELENCLSEHEGEYVRLLGIDTNTRSRVFEALIQRPDGSVPESLGSQPVAVASGGGRQSSYASVSGNLSAEVVNKVRNLLAQGYRIGTEHADKRRFRTSSWQSCAPIQSSNERQVLAELENCLSEHEGEYVRLLGIDTASRSRVFEALIQDPQGPVGSAKAAAAPVSSATPSSHSYTSNGSSSSDVAGQVRGLLAQGYRISAEVADKRRFQTSSWQSLPALSGQSEATVLPALESILQEHKGKYVRLIGIDPAARRRVAELLIQKP.

Positions 1 to 214 are carbonic anhydrase-like domain; the sequence is MPSPTTVPVA…PLRPSSSEAT (214 aa). Positions 194 to 213 are disordered; the sequence is TADFHSTPTPSPLRPSSSEA. The RbcS-like repeat 1, SSUL1 repeat unit spans residues 226–397; the sequence is SSEVITQVRS…VLAELENCLS (172 aa). 2 disulfides stabilise this stretch: Cys261–Cys279 and Cys377–Cys395. One copy of the RbcS-like repeat 2, SSUL2 repeat lies at 341–425; sequence LSAEVVNKVR…RVFEALIQDP (85 aa). Residues 427–459 are disordered; it reads GPVGSAKAAAAPVSSATPSSHSYTSNGSSSSDV. Low complexity predominate over residues 431-457; that stretch reads SAKAAAAPVSSATPSSHSYTSNGSSSS. The stretch at 453–539 is one RbcS-like repeat 3, SSUL3 repeat; the sequence is GSSSSDVAGQ…RVAELLIQKP (87 aa).

The protein belongs to the gamma-class carbonic anhydrase family. As to quaternary structure, probably a homotrimer. Purifies from carboxysomes in complex with both RuBisCO subunits and carbonic anhydrase (ccaA); the complex is probably associated with the carboxysome shell. Interacts with CcmN. Binds holo-RuBisCO (RbcL(8)-RbcS(8)) via its SSUL domains; the SSUL domain binds close to the equitorial domain of RuBisCO between RbcL dimers, with 1 M35 protein per dimer. The short form purifies from carboxysomes in complex with both RuBisCO subunits; the complex is probably associated with the carboxysome shell. Identified as 2 proteins of 58 and 38 kDa by mass spectrometry, called M58 and M35, the shorter protein is translated starting at Val-216. Protease inhibitors do not alter the appearance of M35. In isolated carboxysomes M35 is 4-5 fold more abundant. The first amino acid (equivalent to Val-216) is not seen in Edman degradation, while Tyr-219 and Gln-222 may be post-translationally modified.

It localises to the carboxysome. Its function is as follows. Functions as a scaffold protein for the assembly of beta-carboxysomes, initiates carboxysome assembly by coalescing RuBisCO (ribulose bisphosphate carboxylase, rbcL-rbcS). Produced as a full-length (M58) and a shorter form (M35); both forms are required for correct carboxysome assembly and growth. The short form is more abundant. Despite its strong similarity to gamma-class carbonic anhydrase (CA) it does not have detectable CA activity. Functionally, the M35 isoform is able to condense RuBisCO into a liquid matrix; the presence of disulfide bonds in M35 reduces affinity for RuBisCO, while mutating all 4 Cys to Ser causes a 4-fold increase in doubling time, more than 15% increase in CO(2) requirement, and abnormal carboxysomes. In terms of biological role, beta-carboxysome assembly initiates when soluble RuBisCO is condensed into a liquid matrix in a pre-carboxysome by the RbcS-like domains of probably both CcmM58 and CcmM35. CcmN interacts with the N-terminus of CcmM58, and then recruits the CcmK2 major shell protein plus other less abundant CcmK proteins via CcmN's encapsulation peptide. Shell formation requires CcmK proteins and CcmO. CcmL caps the otherwise elongated carboxysome. Once fully encapsulated carboxysomes are formed, they migrate within the cell probably via interactions with the cytoskeleton. This Synechococcus elongatus (strain ATCC 33912 / PCC 7942 / FACHB-805) (Anacystis nidulans R2) protein is Carboxysome assembly protein CcmM.